A 260-amino-acid polypeptide reads, in one-letter code: Triosephosphate isomerase (260 aa).

11–13 (NWK) provides a ligand contact to substrate. His103 serves as the catalytic Electrophile. Glu175 acts as the Proton acceptor in catalysis. Residues Gly181, Ser220, and 241–242 (GG) contribute to the substrate site.

It belongs to the triosephosphate isomerase family. In terms of assembly, homodimer.

The protein localises to the cytoplasm. It catalyses the reaction D-glyceraldehyde 3-phosphate = dihydroxyacetone phosphate. Its pathway is carbohydrate biosynthesis; gluconeogenesis. The protein operates within carbohydrate degradation; glycolysis; D-glyceraldehyde 3-phosphate from glycerone phosphate: step 1/1. Involved in the gluconeogenesis. Catalyzes stereospecifically the conversion of dihydroxyacetone phosphate (DHAP) to D-glyceraldehyde-3-phosphate (G3P). The protein is Triosephosphate isomerase of Shewanella piezotolerans (strain WP3 / JCM 13877).